The chain runs to 377 residues: 23S rRNA (uracil(747)-C(5))-methyltransferase RlmC (377 aa).

The [4Fe-4S] cluster site is built by Cys-3, Cys-11, Cys-14, and Cys-87. The S-adenosyl-L-methionine site is built by Gln-212, Phe-241, Glu-262, and Asn-307. The Nucleophile role is filled by Cys-334.

It belongs to the class I-like SAM-binding methyltransferase superfamily. RNA M5U methyltransferase family. RlmC subfamily.

It carries out the reaction uridine(747) in 23S rRNA + S-adenosyl-L-methionine = 5-methyluridine(747) in 23S rRNA + S-adenosyl-L-homocysteine + H(+). In terms of biological role, catalyzes the formation of 5-methyl-uridine at position 747 (m5U747) in 23S rRNA. The protein is 23S rRNA (uracil(747)-C(5))-methyltransferase RlmC of Edwardsiella ictaluri (strain 93-146).